A 420-amino-acid chain; its full sequence is Serine hydroxymethyltransferase (420 aa).

Residues L121 and 125–127 (GHL) each bind (6S)-5,6,7,8-tetrahydrofolate. K229 carries the N6-(pyridoxal phosphate)lysine modification.

This sequence belongs to the SHMT family. In terms of assembly, homodimer. The cofactor is pyridoxal 5'-phosphate.

Its subcellular location is the cytoplasm. It carries out the reaction (6R)-5,10-methylene-5,6,7,8-tetrahydrofolate + glycine + H2O = (6S)-5,6,7,8-tetrahydrofolate + L-serine. Its pathway is one-carbon metabolism; tetrahydrofolate interconversion. It functions in the pathway amino-acid biosynthesis; glycine biosynthesis; glycine from L-serine: step 1/1. Catalyzes the reversible interconversion of serine and glycine with tetrahydrofolate (THF) serving as the one-carbon carrier. This reaction serves as the major source of one-carbon groups required for the biosynthesis of purines, thymidylate, methionine, and other important biomolecules. Also exhibits THF-independent aldolase activity toward beta-hydroxyamino acids, producing glycine and aldehydes, via a retro-aldol mechanism. The protein is Serine hydroxymethyltransferase of Glaesserella parasuis serovar 5 (strain SH0165) (Haemophilus parasuis).